Here is a 545-residue protein sequence, read N- to C-terminus: Calcium-dependent protein kinase 6 (545 aa).

Gly2 is lipidated: N-myristoyl glycine. Residues 34-43 show a composition bias toward low complexity; that stretch reads CSSTSTATSS. The tract at residues 34–58 is disordered; the sequence is CSSTSTATSSGGRMPIRSHQQRLSS. Residues 74–332 form the Protein kinase domain; the sequence is YTVGRKLGQG…AHQVLCHPWV (259 aa). ATP contacts are provided by residues 80–88 and Lys103; that span reads LGQGQFGTT. Catalysis depends on Asp198, which acts as the Proton acceptor. Positions 338 to 368 are autoinhibitory domain; that stretch reads APDRPLAPAVLSRLKQFSAMNRLKKMALRVI. EF-hand domains follow at residues 375–410, 411–446, 447–482, and 486–516; these read EELA…YGSN, LREA…LNKL, EREE…HNMA, and IDDI…GAID. Asp388, Asp390, Ser392, Glu399, Asp424, Asp426, Ser428, Thr430, Glu435, Asp460, Asp462, Ser464, Tyr466, Glu471, Asp494, Asp496, Asp498, Arg500, and Glu505 together coordinate Ca(2+). The disordered stretch occupies residues 526-545; the sequence is GRPTTATSDDPSPTISSSSR. The span at 528-545 shows a compositional bias: low complexity; the sequence is PTTATSDDPSPTISSSSR.

The protein belongs to the protein kinase superfamily. Ser/Thr protein kinase family. CDPK subfamily.

Its subcellular location is the membrane. It carries out the reaction L-seryl-[protein] + ATP = O-phospho-L-seryl-[protein] + ADP + H(+). The catalysed reaction is L-threonyl-[protein] + ATP = O-phospho-L-threonyl-[protein] + ADP + H(+). Activated by calcium. Autophosphorylation may play an important role in the regulation of the kinase activity. In terms of biological role, may play a role in signal transduction pathways that involve calcium as a second messenger. The sequence is that of Calcium-dependent protein kinase 6 from Oryza sativa subsp. japonica (Rice).